The sequence spans 216 residues: Large ribosomal subunit protein bL21 (216 aa).

The protein belongs to the bacterial ribosomal protein bL21 family. Part of the 50S ribosomal subunit. Contacts protein L20.

This protein binds to 23S rRNA in the presence of protein L20. The polypeptide is Large ribosomal subunit protein bL21 (Roseobacter denitrificans (strain ATCC 33942 / OCh 114) (Erythrobacter sp. (strain OCh 114))).